The chain runs to 49 residues: Large ribosomal subunit protein bL33 (49 aa).

It belongs to the bacterial ribosomal protein bL33 family.

In Streptococcus suis (strain 98HAH33), this protein is Large ribosomal subunit protein bL33.